Reading from the N-terminus, the 117-residue chain is Nuclear transition protein 2 (117 aa).

The tract at residues 1 to 117 (MDTKMQSLPT…KRRSSGRRYK (117 aa)) is disordered. Low complexity predominate over residues 7–26 (SLPTTHPHPHSSSRPQSHTS). Zn(2+)-binding residues include H12, H14, H16, H24, C32, C34, C38, and C41. The span at 44-53 (AGHAGSSSSP) shows a compositional bias: low complexity. Basic residues-rich tracts occupy residues 60 to 77 (KHPK…RPSH) and 93 to 117 (SKRK…RRYK). Positions 90–98 (GKVSKRKAV) match the Nuclear localization signal motif. S112 bears the Phosphoserine mark.

This sequence belongs to the nuclear transition protein 2 family.

It localises to the nucleus. It is found in the chromosome. Its function is as follows. Plays a key role in the replacement of histones to protamine in the elongating spermatids of mammals. In condensing spermatids, loaded onto the nucleosomes, where it promotes the recruitment and processing of protamines, which are responsible for histone eviction. The histone H2AB1-H2BC1/TH2B dimer is required for loading of TNP2 onto chromatin. This Mus musculus (Mouse) protein is Nuclear transition protein 2.